A 376-amino-acid polypeptide reads, in one-letter code: Heme-dependent oxidative N-demethylase gamma subunit (376 aa).

As to quaternary structure, the heme-dependent oxidative N-demethylase (HODM) is a heterotetramer composed of a catalytic alpha subunit, a FMN/2Fe-2S-dependent oxidoreductase beta subunit, a gamma subunit with putative aminotransferase activity, and a delta subunit of unknown function.

Its function is as follows. Component of the heme-dependent oxidative N-demethylase (HODM) enzyme, that catalyzes the NADPH-dependent oxidation of dimethylamine (DMA) to methylamine (MA) and formaldehyde. Functions in bacterial methylated amine catabolism, linking alkylamine oxidation to the tetrahydrofolate C1 pool. The gamma subunit of HODM may act as an aminomethyltransferase involved in the detoxification of formaldehyde released by the alpha subunit; this process requires tetrahydrofolate (THF). The chain is Heme-dependent oxidative N-demethylase gamma subunit from Ectopseudomonas mendocina (strain ymp) (Pseudomonas mendocina).